The sequence spans 513 residues: L-aspartate oxidase (513 aa).

Residues 17–20 and 46–53 each bind FAD; these read AGIA and SSILAQGG. The Proton donor/acceptor role is filled by arginine 278. FAD is bound by residues glutamate 361 and 377-378; that span reads SL.

This sequence belongs to the FAD-dependent oxidoreductase 2 family. NadB subfamily. It depends on FAD as a cofactor.

It is found in the cytoplasm. The enzyme catalyses L-aspartate + O2 = iminosuccinate + H2O2. Its pathway is cofactor biosynthesis; NAD(+) biosynthesis; iminoaspartate from L-aspartate (oxidase route): step 1/1. Catalyzes the oxidation of L-aspartate to iminoaspartate, the first step in the de novo biosynthesis of NAD(+). The polypeptide is L-aspartate oxidase (nadB) (Mesorhizobium japonicum (strain LMG 29417 / CECT 9101 / MAFF 303099) (Mesorhizobium loti (strain MAFF 303099))).